Consider the following 393-residue polypeptide: UDP-N-acetylglucosamine--N-acetylmuramyl-(pentapeptide) pyrophosphoryl-undecaprenol N-acetylglucosamine transferase (393 aa).

UDP-N-acetyl-alpha-D-glucosamine contacts are provided by residues 15–17 (TAG), asparagine 129, arginine 171, serine 211, and glutamine 322.

It belongs to the glycosyltransferase 28 family. MurG subfamily.

The protein resides in the cell membrane. The catalysed reaction is di-trans,octa-cis-undecaprenyl diphospho-N-acetyl-alpha-D-muramoyl-L-alanyl-D-glutamyl-meso-2,6-diaminopimeloyl-D-alanyl-D-alanine + UDP-N-acetyl-alpha-D-glucosamine = di-trans,octa-cis-undecaprenyl diphospho-[N-acetyl-alpha-D-glucosaminyl-(1-&gt;4)]-N-acetyl-alpha-D-muramoyl-L-alanyl-D-glutamyl-meso-2,6-diaminopimeloyl-D-alanyl-D-alanine + UDP + H(+). It functions in the pathway cell wall biogenesis; peptidoglycan biosynthesis. Cell wall formation. Catalyzes the transfer of a GlcNAc subunit on undecaprenyl-pyrophosphoryl-MurNAc-pentapeptide (lipid intermediate I) to form undecaprenyl-pyrophosphoryl-MurNAc-(pentapeptide)GlcNAc (lipid intermediate II). The polypeptide is UDP-N-acetylglucosamine--N-acetylmuramyl-(pentapeptide) pyrophosphoryl-undecaprenol N-acetylglucosamine transferase (Bifidobacterium longum (strain DJO10A)).